Consider the following 131-residue polypeptide: Profilin LP04 (131 aa).

Belongs to the profilin family. In terms of assembly, occurs in many kinds of cells as a complex with monomeric actin in a 1:1 ratio.

It localises to the cytoplasm. The protein resides in the cytoskeleton. In terms of biological role, binds to actin and affects the structure of the cytoskeleton. At high concentrations, profilin prevents the polymerization of actin, whereas it enhances it at low concentrations. By binding to PIP2, it inhibits the formation of IP3 and DG. This chain is Profilin LP04, found in Oryza sativa subsp. indica (Rice).